Reading from the N-terminus, the 207-residue chain is Vexin (207 aa).

The tract at residues 65-104 is disordered; the sequence is RDTGDRRWLQTGRLQTARPPGAHPTKTPSRPVGISEPKTS.

Belongs to the vexin family.

The protein localises to the cell membrane. Its subcellular location is the nucleus. Its function is as follows. Required for neurogenesis in the neural plate and retina. Strongly cooperates with neural bHLH factors to promote neurogenesis. This is Vexin from Mus musculus (Mouse).